We begin with the raw amino-acid sequence, 351 residues long: tRNA pseudouridine synthase D (351 aa).

Catalysis depends on aspartate 81, which acts as the Nucleophile. The TRUD domain maps to 158 to 304 (GVPNYFGSQR…MRHERRAIEL (147 aa)).

It belongs to the pseudouridine synthase TruD family.

It catalyses the reaction uridine(13) in tRNA = pseudouridine(13) in tRNA. Responsible for synthesis of pseudouridine from uracil-13 in transfer RNAs. The protein is tRNA pseudouridine synthase D of Aliivibrio fischeri (strain MJ11) (Vibrio fischeri).